Consider the following 390-residue polypeptide: 3-ketoacyl-CoA thiolase (390 aa).

Cysteine 95 functions as the Acyl-thioester intermediate in the catalytic mechanism. Residues histidine 346 and cysteine 376 each act as proton acceptor in the active site.

This sequence belongs to the thiolase-like superfamily. Thiolase family. As to quaternary structure, heterotetramer of two alpha chains (FadB) and two beta chains (FadA).

Its subcellular location is the cytoplasm. It catalyses the reaction an acyl-CoA + acetyl-CoA = a 3-oxoacyl-CoA + CoA. It participates in lipid metabolism; fatty acid beta-oxidation. Its function is as follows. Catalyzes the final step of fatty acid oxidation in which acetyl-CoA is released and the CoA ester of a fatty acid two carbons shorter is formed. This is 3-ketoacyl-CoA thiolase from Acinetobacter baylyi (strain ATCC 33305 / BD413 / ADP1).